A 201-amino-acid chain; its full sequence is Methylated-DNA--protein-cysteine methyltransferase (201 aa).

DNA-binding residues include Tyr131, Gly132, and Arg146. The active-site Nucleophile; methyl group acceptor is Cys163.

The protein belongs to the MGMT family.

Its subcellular location is the nucleus. It catalyses the reaction a 6-O-methyl-2'-deoxyguanosine in DNA + L-cysteinyl-[protein] = S-methyl-L-cysteinyl-[protein] + a 2'-deoxyguanosine in DNA. The enzyme catalyses a 4-O-methyl-thymidine in DNA + L-cysteinyl-[protein] = a thymidine in DNA + S-methyl-L-cysteinyl-[protein]. Its function is as follows. Involved in the cellular defense against the biological effects of O6-methylguanine (O6-MeG) and O4-methylthymine (O4-MeT) in DNA. Repairs the methylated nucleobase in DNA by stoichiometrically transferring the methyl group to a cysteine residue in the enzyme. This is a suicide reaction: the enzyme is irreversibly inactivated. The protein is Methylated-DNA--protein-cysteine methyltransferase (MGT1) of Lodderomyces elongisporus (strain ATCC 11503 / CBS 2605 / JCM 1781 / NBRC 1676 / NRRL YB-4239) (Yeast).